The following is a 193-amino-acid chain: Probable nicotinate-nucleotide adenylyltransferase (193 aa).

Belongs to the NadD family.

The catalysed reaction is nicotinate beta-D-ribonucleotide + ATP + H(+) = deamido-NAD(+) + diphosphate. It functions in the pathway cofactor biosynthesis; NAD(+) biosynthesis; deamido-NAD(+) from nicotinate D-ribonucleotide: step 1/1. Its function is as follows. Catalyzes the reversible adenylation of nicotinate mononucleotide (NaMN) to nicotinic acid adenine dinucleotide (NaAD). The protein is Probable nicotinate-nucleotide adenylyltransferase of Borreliella afzelii (strain PKo) (Borrelia afzelii).